The sequence spans 47 residues: Defensin-like protein 1 (47 aa).

Intrachain disulfides connect Cys5-Cys47, Cys16-Cys36, Cys22-Cys43, and Cys26-Cys45.

The protein belongs to the DEFL family.

Functionally, fabatins have antibacterial activity against Gram-positive and Gram-negative bacteria. High activity against P.aeruginosa. No activity against S.cerevisiae and C.albicans. The polypeptide is Defensin-like protein 1 (Vicia faba (Broad bean)).